The sequence spans 633 residues: Phosphomethylpyrimidine synthase (633 aa).

Substrate contacts are provided by residues N245, M274, Y303, H339, 359–361, 400–403, and E439; these read SRG and DGLR. A Zn(2+)-binding site is contributed by H443. Y466 contributes to the substrate binding site. Position 507 (H507) interacts with Zn(2+). [4Fe-4S] cluster-binding residues include C587, C590, and C595.

It belongs to the ThiC family. In terms of assembly, homodimer. The cofactor is [4Fe-4S] cluster.

The enzyme catalyses 5-amino-1-(5-phospho-beta-D-ribosyl)imidazole + S-adenosyl-L-methionine = 4-amino-2-methyl-5-(phosphooxymethyl)pyrimidine + CO + 5'-deoxyadenosine + formate + L-methionine + 3 H(+). It functions in the pathway cofactor biosynthesis; thiamine diphosphate biosynthesis. In terms of biological role, catalyzes the synthesis of the hydroxymethylpyrimidine phosphate (HMP-P) moiety of thiamine from aminoimidazole ribotide (AIR) in a radical S-adenosyl-L-methionine (SAM)-dependent reaction. This chain is Phosphomethylpyrimidine synthase, found in Neisseria meningitidis serogroup C (strain 053442).